The chain runs to 298 residues: Homoserine kinase (298 aa).

79 to 89 (PIARGLGSSGA) is an ATP binding site.

This sequence belongs to the GHMP kinase family. Homoserine kinase subfamily.

The protein localises to the cytoplasm. The enzyme catalyses L-homoserine + ATP = O-phospho-L-homoserine + ADP + H(+). It functions in the pathway amino-acid biosynthesis; L-threonine biosynthesis; L-threonine from L-aspartate: step 4/5. Its function is as follows. Catalyzes the ATP-dependent phosphorylation of L-homoserine to L-homoserine phosphate. The chain is Homoserine kinase from Pyrobaculum islandicum (strain DSM 4184 / JCM 9189 / GEO3).